The primary structure comprises 220 residues: Putative threonylcarbamoyl-AMP synthase (220 aa).

A YrdC-like domain is found at 17-202; sequence ARGIASAVAA…TPRILRAGPV (186 aa).

The protein belongs to the SUA5 family.

It localises to the cytoplasm. The enzyme catalyses L-threonine + hydrogencarbonate + ATP = L-threonylcarbamoyladenylate + diphosphate + H2O. In terms of biological role, required for the formation of a threonylcarbamoyl group on adenosine at position 37 (t(6)A37) in tRNAs that read codons beginning with adenine. Catalyzes the conversion of L-threonine, HCO(3)(-)/CO(2) and ATP to give threonylcarbamoyl-AMP (TC-AMP) as the acyladenylate intermediate, with the release of diphosphate. This is Putative threonylcarbamoyl-AMP synthase from Mycobacterium leprae (strain TN).